A 789-amino-acid polypeptide reads, in one-letter code: MLPCCEPLPLQTEKLELPSISQVHTRGPVDIPWYNHHAAERPLLSGDKLPALSLPTASQPPISGQSYRTSYEEASASHNASARTSLSGTAPVINEARSPPQSADLAAGGQGRLSLDSSAPQEFSIPQNTVGDSYYTNPTAIGSMNHTQPYMDVHSSHLSSAQPYASQAATAGGIAHYPQYHQQPPVLQPASTTYGPASSYQYAYPGGVTSSQPGPQPPTTSVSSQVPAQLLPLPVTSHTVAPAGYGNNTGTPMQGYVYDATGQVAPPGAKPRVTATLWEDEGSLCYQVEARGVCVARREDNHMINGTKLLNVAGMTRGRRDGILKSEKVRHVVKIGPMHLKGVWIPFERALEFANKEKITDLLYPLFVHNIGGLLYHPTNQTRTNMVVQESQQRRLEGPQATRASQGPQPPALHHHHSLQTPVPSHMSQPHAMTSQSAARPGLDRAHTFPTPPASASSLMGITNQGSSYEWGNQGMNSGVPNTQPLSIDTTLSNARSMPTTPATTPPGSNMQGMQAYQSQSGYDNSKSYYSAAPPSHPQYAPQQPLTQPMAPYGQTMPANTYIKNDMAPPTARTSGGPSDVEQADVKADRYAQTNGHVSNGAGEPVPEHEPEYVQHDSAGYNTNRGSYTYTTNPSVGSLAGDHSQLASDMSGSPSQQNGSGRMTPRTSGAPPQWASGYNTPPRSAAVSSLYNSVSETRGASANGTTDNYSVASNPAPGYSTGMNGPLGSGKRMREDDDVDQIVRPDSRGAEYESKRRKTLTEATVGGPVGGVPLGLQPMKAGGVMARRR.

2 disordered regions span residues 50-131 and 205-224; these read PALS…NTVG and PGGVTSSQPGPQPPTTSVSS. Polar residues-rich tracts occupy residues 55–69, 76–88, and 115–131; these read PTASQPPISGQSYRT, ASHNASARTSLSG, and LDSSAPQEFSIPQNTVG. In terms of domain architecture, HTH APSES-type spans 272 to 378; sequence RVTATLWEDE…HNIGGLLYHP (107 aa). Positions 306–327 form a DNA-binding region, H-T-H motif; sequence GTKLLNVAGMTRGRRDGILKSE. Disordered stretches follow at residues 389-459, 487-543, and 616-789; these read QESQ…ASSL, SIDT…YAPQ, and HDSA…ARRR. Composition is skewed to polar residues over residues 419–438, 487–529, 620–636, 645–667, and 676–713; these read LQTPVPSHMSQPHAMTSQSA, SIDT…SKSY, GYNTNRGSYTYTTNPSV, QLASDMSGSPSQQNGSGRMTPRT, and SGYNTPPRSAAVSSLYNSVSETRGASANGTTDNYSVAS. Residues 731 to 758 are nuclear localization domain; the sequence is KRMREDDDVDQIVRPDSRGAEYESKRRK. The span at 741 to 754 shows a compositional bias: basic and acidic residues; sequence QIVRPDSRGAEYES.

Belongs to the EFG1/PHD1/stuA family.

The protein resides in the nucleus. Functionally, transcription factor that regulates asexual reproduction. Binds the StuA-response elements (StRE) with the consensus sequence 5'-(A/T)CGCG(T/A)N(A/C)-3' at the promoters of target genes. In Aspergillus flavus (strain ATCC 200026 / FGSC A1120 / IAM 13836 / NRRL 3357 / JCM 12722 / SRRC 167), this protein is Cell pattern formation-associated protein stuA.